We begin with the raw amino-acid sequence, 80 residues long: Raniseptin-6 (80 aa).

Positions 1-22 (MAFLKKSLFLVLFLGIVSLSIC) are cleaved as a signal peptide. Residues 23-49 (EEEKREGEEEEKQEEENEELSEEELRE) constitute a propeptide that is removed on maturation.

The protein belongs to the frog skin active peptide (FSAP) family. Dermaseptin subfamily. In terms of tissue distribution, expressed by the skin glands.

The protein localises to the secreted. Functionally, has antibacterial activity. The sequence is that of Raniseptin-6 from Boana raniceps (Chaco tree frog).